The chain runs to 216 residues: MRFIISLLFVFTLIFNLAFSHIGIDVSSGTNESGFECFKQKKYSRAIIRCYESIGSIDTNCKPSIENAKKAGIETIDVYLFPCYDCGNPENQVTTTSHYLKDYLKDLDFLWLDIEGPGQYWSGSYDNNKKFIQGLLDSAKTAGFKHVGIYTSESQWPGIVGSWDGGKDYPIWYANYDGAENFNDFSPFNGWTKPHMKQYAGNINECGLGIDKNYWE.

The first 20 residues, 1–20 (MRFIISLLFVFTLIFNLAFS), serve as a signal peptide directing secretion. In terms of domain architecture, Ch-type lysozyme spans 21-216 (HIGIDVSSGT…GLGIDKNYWE (196 aa)). The active site involves aspartate 25. An N-linked (GlcNAc...) asparagine glycan is attached at asparagine 31. Residues aspartate 113 and glutamate 115 contribute to the active site.

This sequence belongs to the glycosyl hydrolase 25 family.

The protein resides in the secreted. The enzyme catalyses Hydrolysis of (1-&gt;4)-beta-linkages between N-acetylmuramic acid and N-acetyl-D-glucosamine residues in a peptidoglycan and between N-acetyl-D-glucosamine residues in chitodextrins.. This chain is Probable GH family 25 lysozyme 5, found in Dictyostelium discoideum (Social amoeba).